A 119-amino-acid chain; its full sequence is uncharacterized protein (119 aa).

To Synechocystis PCC 6803 slr0903.

This is an uncharacterized protein from Methanocaldococcus jannaschii (strain ATCC 43067 / DSM 2661 / JAL-1 / JCM 10045 / NBRC 100440) (Methanococcus jannaschii).